We begin with the raw amino-acid sequence, 341 residues long: Ribose-phosphate pyrophosphokinase 5 (341 aa).

3 residues coordinate Mg(2+): Asp-152, His-154, and Asp-167.

The protein belongs to the ribose-phosphate pyrophosphokinase family.

Its subcellular location is the cytoplasm. It carries out the reaction D-ribose 5-phosphate + ATP = 5-phospho-alpha-D-ribose 1-diphosphate + AMP + H(+). It participates in metabolic intermediate biosynthesis; 5-phospho-alpha-D-ribose 1-diphosphate biosynthesis; 5-phospho-alpha-D-ribose 1-diphosphate from D-ribose 5-phosphate (route I): step 1/1. Functionally, 5-phosphoribose 1-diphosphate synthase involved in nucleotide, histidine, and tryptophan biosynthesis. Active in heteromultimeric complexes with other 5-phosphoribose 1-diphosphate synthases. This Schizosaccharomyces pombe (strain 972 / ATCC 24843) (Fission yeast) protein is Ribose-phosphate pyrophosphokinase 5.